The sequence spans 351 residues: Phosphoribosylformylglycinamidine cyclo-ligase (351 aa).

The protein belongs to the AIR synthase family.

It is found in the cytoplasm. It catalyses the reaction 2-formamido-N(1)-(5-O-phospho-beta-D-ribosyl)acetamidine + ATP = 5-amino-1-(5-phospho-beta-D-ribosyl)imidazole + ADP + phosphate + H(+). Its pathway is purine metabolism; IMP biosynthesis via de novo pathway; 5-amino-1-(5-phospho-D-ribosyl)imidazole from N(2)-formyl-N(1)-(5-phospho-D-ribosyl)glycinamide: step 2/2. The sequence is that of Phosphoribosylformylglycinamidine cyclo-ligase from Burkholderia ambifaria (strain ATCC BAA-244 / DSM 16087 / CCUG 44356 / LMG 19182 / AMMD) (Burkholderia cepacia (strain AMMD)).